The primary structure comprises 222 residues: Octanoyltransferase (222 aa).

The BPL/LPL catalytic domain occupies 34 to 214; sequence AEAPSTVLLL…EFRKHEEALV (181 aa). Residues 72–79, 144–146, and 157–159 each bind substrate; these read RGGKLTWH, AIG, and GIA. Cysteine 175 (acyl-thioester intermediate) is an active-site residue.

The protein belongs to the LipB family.

The protein resides in the cytoplasm. The catalysed reaction is octanoyl-[ACP] + L-lysyl-[protein] = N(6)-octanoyl-L-lysyl-[protein] + holo-[ACP] + H(+). It functions in the pathway protein modification; protein lipoylation via endogenous pathway; protein N(6)-(lipoyl)lysine from octanoyl-[acyl-carrier-protein]: step 1/2. Functionally, catalyzes the transfer of endogenously produced octanoic acid from octanoyl-acyl-carrier-protein onto the lipoyl domains of lipoate-dependent enzymes. Lipoyl-ACP can also act as a substrate although octanoyl-ACP is likely to be the physiological substrate. This is Octanoyltransferase from Arthrobacter sp. (strain FB24).